We begin with the raw amino-acid sequence, 382 residues long: GTPase Obg (382 aa).

The Obg domain occupies 2 to 161 (VKFADESKIR…REIIVELNII (160 aa)). The OBG-type G domain occupies 162 to 328 (ADIGLVGFPN…VKKAFIRLAD (167 aa)). GTP contacts are provided by residues 168–175 (GFPNAGKS), 193–197 (FTTKI), 215–218 (DIPG), 282–285 (TKLD), and 309–311 (SLY). Mg(2+)-binding residues include Ser175 and Thr195. The tract at residues 360-382 (EEKNDDEHFGATVSLSRKRKPKK) is disordered.

Belongs to the TRAFAC class OBG-HflX-like GTPase superfamily. OBG GTPase family. Monomer. The cofactor is Mg(2+).

It is found in the cytoplasm. An essential GTPase which binds GTP, GDP and possibly (p)ppGpp with moderate affinity, with high nucleotide exchange rates and a fairly low GTP hydrolysis rate. Plays a role in control of the cell cycle, stress response, ribosome biogenesis and in those bacteria that undergo differentiation, in morphogenesis control. This is GTPase Obg from Treponema denticola (strain ATCC 35405 / DSM 14222 / CIP 103919 / JCM 8153 / KCTC 15104).